The sequence spans 434 residues: Glutamate-1-semialdehyde 2,1-aminomutase (434 aa).

Lys265 is modified (N6-(pyridoxal phosphate)lysine).

This sequence belongs to the class-III pyridoxal-phosphate-dependent aminotransferase family. HemL subfamily. Homodimer. Pyridoxal 5'-phosphate serves as cofactor.

The protein resides in the cytoplasm. It catalyses the reaction (S)-4-amino-5-oxopentanoate = 5-aminolevulinate. Its pathway is porphyrin-containing compound metabolism; protoporphyrin-IX biosynthesis; 5-aminolevulinate from L-glutamyl-tRNA(Glu): step 2/2. This chain is Glutamate-1-semialdehyde 2,1-aminomutase, found in Ruminiclostridium cellulolyticum (strain ATCC 35319 / DSM 5812 / JCM 6584 / H10) (Clostridium cellulolyticum).